We begin with the raw amino-acid sequence, 217 residues long: GTP-binding protein Rit2 (217 aa).

GTP contacts are provided by residues G27–S34, D74–Q78, and N133–D136.

The protein belongs to the small GTPase superfamily. Ras family. As to quaternary structure, interacts with PLXNB3. Interacts with AFDN, the C-terminal domain of RALGDS and RLF, but not with RIN1 and PIK3CA. RLF binds exclusively to the active GTP-bound form. Binds calmodulin. Interacts with POU4F1 (via N-terminus); the interaction controls POU4F1 transactivation activity on some neuronal target genes. Expressed in ganglion cell layer (GCL), inner plexiform layer (IPL) and inner nuclear layer (INL) of the retina. Expressed in retinal ganglion cells (RGCs). Expressed in horizontal, bipolar and amacrine cells, but not Mueller glia, of the INL (at protein level). Neuron-specific. Expressed in ganglion cell layer (GCL) and inner plexiform layer (IPL).

The protein resides in the nucleus. It localises to the cell membrane. The catalysed reaction is GTP + H2O = GDP + phosphate + H(+). Alternates between an inactive form bound to GDP and an active form bound to GTP. Its function is as follows. Binds and exchanges GTP and GDP. Binds and modulates the activation of POU4F1 as gene expression regulator. This Mus musculus (Mouse) protein is GTP-binding protein Rit2 (Rit2).